The primary structure comprises 212 residues: Large ribosomal subunit protein bL25 (212 aa).

Over residues 1 to 16 (MKTRIDLTVEPRETGK) the composition is skewed to basic and acidic residues. Residues 1 to 22 (MKTRIDLTVEPRETGKHNSRGL) form a disordered region.

This sequence belongs to the bacterial ribosomal protein bL25 family. CTC subfamily. As to quaternary structure, part of the 50S ribosomal subunit; part of the 5S rRNA/L5/L18/L25 subcomplex. Contacts the 5S rRNA. Binds to the 5S rRNA independently of L5 and L18.

Functionally, this is one of the proteins that binds to the 5S RNA in the ribosome where it forms part of the central protuberance. The protein is Large ribosomal subunit protein bL25 of Bdellovibrio bacteriovorus (strain ATCC 15356 / DSM 50701 / NCIMB 9529 / HD100).